Here is a 150-residue protein sequence, read N- to C-terminus: Large ribosomal subunit protein uL15 (150 aa).

The tract at residues 1–57 is disordered; the sequence is MTIKLESLQSNKGSRRKKMRKGRGIAAGQGASCGFGMRGQKSRSGRPTRPGFEGGQM. Positions 13 to 23 are enriched in basic residues; sequence GSRRKKMRKGR. Over residues 25–37 the composition is skewed to gly residues; that stretch reads IAAGQGASCGFGM.

It belongs to the universal ribosomal protein uL15 family. In terms of assembly, part of the 50S ribosomal subunit.

In terms of biological role, binds to the 23S rRNA. This chain is Large ribosomal subunit protein uL15, found in Prochlorococcus marinus (strain NATL1A).